A 1064-amino-acid chain; its full sequence is Adenylate cyclase type 4 (1064 aa).

At 1 to 28 (MARLFSPRPPPSEDLFYETYYSLSQQYP) the chain is on the cytoplasmic side. The next 6 membrane-spanning stretches (helical) occupy residues 29–50 (LLIL…VAWA), 61–80 (FLTT…GLAS), 94–117 (GLIW…VSAW), 120–138 (VSFF…PLGM), 141–162 (AAAA…YLGW), and 170–190 (LLPQ…VGAY). At 191–582 (HKALMERALR…YRLSALPAFK (392 aa)) the chain is on the cytoplasmic side. The Mg(2+) site is built by aspartate 278, isoleucine 279, and aspartate 322. ATP is bound by residues 278–283 (DIVGFT), 320–322 (LGD), and arginine 366. The interval 498 to 523 (DSPASTSTPLPEKAFSPQWSLDRSRT) is disordered. At serine 517 the chain carries Phosphoserine. At threonine 533 the chain carries Phosphothreonine. 3 helical membrane-spanning segments follow: residues 583-604 (YYAA…LVTT), 608-630 (ALAT…CFSE), and 661-684 (VALG…FLPV). At 685-707 (SSDCPFLAPNVSSVAFNTSWELP) the chain is on the extracellular side. 2 N-linked (GlcNAc...) asparagine glycosylation sites follow: asparagine 694 and asparagine 701. Transmembrane regions (helical) follow at residues 708–733 (ASLP…SLFL), 741–761 (LLLL…SHAW), and 788–804 (MGAI…LVLA). The Cytoplasmic portion of the chain corresponds to 805 to 1064 (RQNEYYCRLD…LTRTGSPSAS (260 aa)). Residues lysine 914, 994 to 996 (DIW), 1001 to 1005 (NVASR), and lysine 1041 each bind ATP.

Belongs to the adenylyl cyclase class-4/guanylyl cyclase family. The cofactor is Mg(2+). Mn(2+) serves as cofactor. As to expression, widely distributed.

The protein resides in the cell membrane. Its subcellular location is the cytoplasm. The catalysed reaction is ATP = 3',5'-cyclic AMP + diphosphate. With respect to regulation, activated by forskolin. Insensitive to calcium/calmodulin. Stimulated by GNAS and by the G-protein beta and gamma subunit complex. Catalyzes the formation of the signaling molecule cAMP in response to G-protein signaling. This chain is Adenylate cyclase type 4 (Adcy4), found in Rattus norvegicus (Rat).